We begin with the raw amino-acid sequence, 209 residues long: Cerebral peptide 1 (209 aa).

A signal peptide spans Met1 to Ser20. Over residues Ser21–Ala39 the composition is skewed to polar residues. Residues Ser21–His43 constitute a propeptide, connecting peptide 1. The disordered stretch occupies residues Ser21–Asn56. Trp49 bears the Tryptophan amide mark. The propeptide at Ser53–Leu77 is connecting peptide 2. A tryptophan amide mark is found at Trp83 and Trp105. Residues Glu98 to Gly169 are disordered. Positions Gly109–Glu122 are cleaved as a propeptide — connecting peptide 4. 6 positions are modified to tryptophan amide: Trp128, Trp135, Trp142, Trp149, Trp156, and Trp163. Positions Ser167–Ser191 are cleaved as a propeptide — connecting peptide 5. A disulfide bond links Cys172 and Cys197.

In terms of assembly, homodimer; disulfide-linked. In terms of tissue distribution, cerebral peptide 1 is expressed in the cerebral, pedal and buccal ganglia and B1 and B2 neurons. APGW-amide is expressed in buccal ganglia and several neurons.

The protein localises to the secreted. Its function is as follows. May function as a peptide transmitter. In Aplysia californica (California sea hare), this protein is Cerebral peptide 1.